The sequence spans 347 residues: MLTNPSQVIIRNQDSLSQHKVLVLNHEADLLPKALLDVAASVDALALDYHHYLHLAPHANTKLRCYFGHDLPHQDPLEREKYDTVIVYFPKAKPLAPYLFNLAANHLVPNGQLLVVGENKGGIKSLVKLLPEYFATGMKLDNARHCLLFGSSLEGSAPAMKLSDWVSQYQLTTPQGEISICNLVGVFSEKRLDLGTELLLSHLPTLSGRVLDFGCGAGVIAAALLKAQPSLSLECVDINAMALASCELTLAANGMTAKVYPSDGLAQTTGKFNGIISNPPFHDGLASTTSIAQNFVTDSAKQLQHNGIWQIVANRHLPYSDIIAAEFGQLKVVADNNKYKLYYFQHK.

Belongs to the methyltransferase superfamily. RsmC family. Monomer.

Its subcellular location is the cytoplasm. The enzyme catalyses guanosine(1207) in 16S rRNA + S-adenosyl-L-methionine = N(2)-methylguanosine(1207) in 16S rRNA + S-adenosyl-L-homocysteine + H(+). Its function is as follows. Specifically methylates the guanine in position 1207 of 16S rRNA in the 30S particle. The protein is Ribosomal RNA small subunit methyltransferase C of Shewanella baltica (strain OS155 / ATCC BAA-1091).